We begin with the raw amino-acid sequence, 415 residues long: Dihydroorotase (415 aa).

The Zn(2+) site is built by H54 and H56. Residues 56–58 (HFR) and N88 each bind substrate. Positions 136, 169, 217, and 278 each coordinate Zn(2+). K136 carries the post-translational modification N6-carboxylysine. D278 is a catalytic residue. H282 is a substrate binding site.

This sequence belongs to the metallo-dependent hydrolases superfamily. DHOase family. Class I DHOase subfamily. Zn(2+) serves as cofactor.

The catalysed reaction is (S)-dihydroorotate + H2O = N-carbamoyl-L-aspartate + H(+). Its pathway is pyrimidine metabolism; UMP biosynthesis via de novo pathway; (S)-dihydroorotate from bicarbonate: step 3/3. Functionally, catalyzes the reversible cyclization of carbamoyl aspartate to dihydroorotate. The protein is Dihydroorotase of Thermoplasma volcanium (strain ATCC 51530 / DSM 4299 / JCM 9571 / NBRC 15438 / GSS1).